The chain runs to 296 residues: MKTGIIQQSLSGFYDVIADEKIYRTRARGNFRQRKIKPVVGDHVEFSAENQQEGYLLKILPRRNQLVRPPVANVDMAVVVTSAKEPAFSANLLDRQLIALEAQDVTPLIYFSKTDLLTDDEYQQLLPTIEGYRKIGYQVYAAREPFDSDQLANLMEGLKGNIVTMMGQTGAGKSTLLNHLAPQLKLATGEISQALQRGRHTTRKVSLLDVNGALIADTPGFSSYETFDMTVNDLPQLFPEMAKISADCKFRGCLHIKEPQCAVKEAVNNGIIMKSRYNDYLQFHELIANQKPNYKK.

Residues Arg-63–Tyr-224 form the CP-type G domain. Residues Ser-112–Asp-115 and Gly-167–Thr-175 each bind GTP. The Zn(2+) site is built by Cys-248, Cys-253, His-255, and Cys-261.

The protein belongs to the TRAFAC class YlqF/YawG GTPase family. RsgA subfamily. Monomer. Associates with 30S ribosomal subunit, binds 16S rRNA. It depends on Zn(2+) as a cofactor.

It localises to the cytoplasm. One of several proteins that assist in the late maturation steps of the functional core of the 30S ribosomal subunit. Helps release RbfA from mature subunits. May play a role in the assembly of ribosomal proteins into the subunit. Circularly permuted GTPase that catalyzes slow GTP hydrolysis, GTPase activity is stimulated by the 30S ribosomal subunit. This Limosilactobacillus reuteri (strain DSM 20016) (Lactobacillus reuteri) protein is Small ribosomal subunit biogenesis GTPase RsgA.